We begin with the raw amino-acid sequence, 331 residues long: Probable allantoicase (331 aa).

Belongs to the allantoicase family.

It carries out the reaction allantoate + H2O = (S)-ureidoglycolate + urea. It functions in the pathway nitrogen metabolism; (S)-allantoin degradation; (S)-ureidoglycolate from allantoate (aminidohydrolase route): step 1/1. This chain is Probable allantoicase, found in Pseudomonas fluorescens (strain Pf0-1).